The sequence spans 278 residues: uncharacterized protein (278 aa).

Positions 1–11 (MMIHIHQDKKM) are enriched in basic and acidic residues. Disordered stretches follow at residues 1-107 (MMIH…RYFK) and 206-278 (KVSA…KASR). A compositionally biased stretch (low complexity) spans 62-94 (KQSGGKNAKSGSKSAKSGSKSAKSGSKTSKTQS). Over residues 97-107 (KGDESRDRYFK) the composition is skewed to basic and acidic residues. Residues 249-260 (SAKNAKSTGNKK) show a composition bias toward polar residues. The segment covering 264-278 (KSAGAKKAPAAKASR) has biased composition (low complexity).

This is an uncharacterized protein from Acanthamoeba polyphaga mimivirus (APMV).